The sequence spans 185 residues: Peptidyl-tRNA hydrolase (185 aa).

TRNA is bound at residue Tyr14. His19 serves as the catalytic Proton acceptor. The tRNA site is built by Phe64, Asn66, and Asn112.

It belongs to the PTH family. Monomer.

It localises to the cytoplasm. It catalyses the reaction an N-acyl-L-alpha-aminoacyl-tRNA + H2O = an N-acyl-L-amino acid + a tRNA + H(+). Its function is as follows. Hydrolyzes ribosome-free peptidyl-tRNAs (with 1 or more amino acids incorporated), which drop off the ribosome during protein synthesis, or as a result of ribosome stalling. Functionally, catalyzes the release of premature peptidyl moieties from peptidyl-tRNA molecules trapped in stalled 50S ribosomal subunits, and thus maintains levels of free tRNAs and 50S ribosomes. This is Peptidyl-tRNA hydrolase from Alkaliphilus oremlandii (strain OhILAs) (Clostridium oremlandii (strain OhILAs)).